A 362-amino-acid polypeptide reads, in one-letter code: mRNA decay activator protein ZFP36L2 (362 aa).

A compositionally biased stretch (basic and acidic residues) spans 100–109; sequence SFSENGERSQ. Positions 100 to 126 are disordered; the sequence is SFSENGERSQHLLHLQQQQQQKAGAQV. A compositionally biased stretch (low complexity) spans 111-120; it reads LLHLQQQQQQ. Positions 130 to 135 match the RNA-binding motif; sequence RYKTEL. 2 C3H1-type zinc fingers span residues 130–158 and 168–196; these read RYKT…HGFH and KYKT…HNAE. The RNA-binding stretch occupies residues 147-188; sequence YGEKCQFAHGFHELRSLTRHPKYKTELCRTFHTIGFCPYGPR. 2 disordered regions span residues 225–244 and 306–362; these read DSPL…SSSS and SESP…ISDD. The span at 327-346 shows a compositional bias: low complexity; it reads YLSGSLSSGSLSGSDSPTLD.

In terms of processing, phosphorylated.

It is found in the nucleus. It localises to the cytoplasm. Its function is as follows. Zinc-finger RNA-binding protein that destabilizes several cytoplasmic AU-rich element (ARE)-containing mRNA transcripts by promoting their poly(A) tail removal or deadenylation, and hence provide a mechanism for attenuating protein synthesis. Acts as a 3'-untranslated region (UTR) ARE mRNA-binding adapter protein to communicate signaling events to the mRNA decay machinery. Functions by recruiting the CCR4-NOT deadenylase complex and probably other components of the cytoplasmic RNA decay machinery to the bound ARE-containing mRNAs, and hence promotes ARE-mediated mRNA deadenylation and decay processes. Binds to 3'-UTR ARE of numerous mRNAs. Also induces the degradation of ARE-containing mRNAs even in absence of poly(A) tail. Required for tubulogenesis during pronephros development. The sequence is that of mRNA decay activator protein ZFP36L2 (zfp36l2) from Xenopus tropicalis (Western clawed frog).